Here is a 477-residue protein sequence, read N- to C-terminus: Kinesin-like protein KIN-1 (477 aa).

One can recognise a Kinesin motor domain in the interval 3–330; sequence NVTVCVRFRP…VRFGTRTKLI (328 aa). 86 to 93 is an ATP binding site; sequence GQTGAGKT. A coiled-coil region spans residues 402–451; it reads QDAASQEVSLLTQAVEELKETVEELTDENERLRGELELAQEAAAAAAAAR.

This sequence belongs to the TRAFAC class myosin-kinesin ATPase superfamily. Kinesin family. KIN-1 subfamily. Widely expressed. Expressed in young roots and leaves, in mature roots, culm, sheath and leaves, and in panicles at various developmental stages. Strongest expression is detected in panicles. In the panicle, expression is detected in anthers, glumme, lemma and palea. In the spikelet, expression is detected in both microsporocyte and the anther walls.

Its subcellular location is the cytoplasm. Functionally, kinesin-like motor protein that exhibits microtubule-stimulated ATPase activity. Plays an essential role in male meiotic chromosomal dynamics, male gametogenesis and anther dehiscence. May play a minor and nonessential role in regulating meiotic spindle formation. This chain is Kinesin-like protein KIN-1, found in Oryza sativa subsp. japonica (Rice).